A 356-amino-acid polypeptide reads, in one-letter code: Phosphoserine aminotransferase (356 aa).

Arg-41 contacts L-glutamate. Pyridoxal 5'-phosphate contacts are provided by residues 76–77 (AS), Trp-102, Thr-150, Asp-169, and Gln-192. Lys-193 is modified (N6-(pyridoxal phosphate)lysine). 234-235 (NT) serves as a coordination point for pyridoxal 5'-phosphate.

The protein belongs to the class-V pyridoxal-phosphate-dependent aminotransferase family. SerC subfamily. As to quaternary structure, homodimer. Requires pyridoxal 5'-phosphate as cofactor.

It is found in the cytoplasm. The enzyme catalyses O-phospho-L-serine + 2-oxoglutarate = 3-phosphooxypyruvate + L-glutamate. The catalysed reaction is 4-(phosphooxy)-L-threonine + 2-oxoglutarate = (R)-3-hydroxy-2-oxo-4-phosphooxybutanoate + L-glutamate. It functions in the pathway amino-acid biosynthesis; L-serine biosynthesis; L-serine from 3-phospho-D-glycerate: step 2/3. The protein operates within cofactor biosynthesis; pyridoxine 5'-phosphate biosynthesis; pyridoxine 5'-phosphate from D-erythrose 4-phosphate: step 3/5. Functionally, catalyzes the reversible conversion of 3-phosphohydroxypyruvate to phosphoserine and of 3-hydroxy-2-oxo-4-phosphonooxybutanoate to phosphohydroxythreonine. The sequence is that of Phosphoserine aminotransferase from Flavobacterium johnsoniae (strain ATCC 17061 / DSM 2064 / JCM 8514 / BCRC 14874 / CCUG 350202 / NBRC 14942 / NCIMB 11054 / UW101) (Cytophaga johnsonae).